The chain runs to 415 residues: Serine hydroxymethyltransferase (415 aa).

(6S)-5,6,7,8-tetrahydrofolate-binding positions include Leu-119 and 123 to 125 (GHL). Lys-228 bears the N6-(pyridoxal phosphate)lysine mark. 353-355 (SAF) contributes to the (6S)-5,6,7,8-tetrahydrofolate binding site.

It belongs to the SHMT family. As to quaternary structure, homodimer. Pyridoxal 5'-phosphate is required as a cofactor.

It localises to the cytoplasm. The catalysed reaction is (6R)-5,10-methylene-5,6,7,8-tetrahydrofolate + glycine + H2O = (6S)-5,6,7,8-tetrahydrofolate + L-serine. It functions in the pathway one-carbon metabolism; tetrahydrofolate interconversion. It participates in amino-acid biosynthesis; glycine biosynthesis; glycine from L-serine: step 1/1. Its function is as follows. Catalyzes the reversible interconversion of serine and glycine with tetrahydrofolate (THF) serving as the one-carbon carrier. Also exhibits THF-independent aldolase activity toward beta-hydroxyamino acids, producing glycine and aldehydes, via a retro-aldol mechanism. This Haloarcula marismortui (strain ATCC 43049 / DSM 3752 / JCM 8966 / VKM B-1809) (Halobacterium marismortui) protein is Serine hydroxymethyltransferase.